Reading from the N-terminus, the 265-residue chain is Energy-coupling factor transporter transmembrane protein EcfT (265 aa).

6 helical membrane-spanning segments follow: residues 29 to 49, 63 to 83, 94 to 114, 117 to 137, 143 to 163, and 243 to 263; these read VMAF…ALMF, FLFF…TLLL, LVDL…AMMF, FVLI…IELT, ILAP…MLSI, and RFAD…LFWL.

The protein belongs to the energy-coupling factor EcfT family. Forms a stable energy-coupling factor (ECF) transporter complex composed of 2 membrane-embedded substrate-binding proteins (S component), 2 ATP-binding proteins (A component) and 2 transmembrane proteins (T component). May be able to interact with more than 1 S component at a time.

The protein localises to the cell membrane. In terms of biological role, transmembrane (T) component of an energy-coupling factor (ECF) ABC-transporter complex. Unlike classic ABC transporters this ECF transporter provides the energy necessary to transport a number of different substrates. This chain is Energy-coupling factor transporter transmembrane protein EcfT, found in Listeria innocua serovar 6a (strain ATCC BAA-680 / CLIP 11262).